We begin with the raw amino-acid sequence, 67 residues long: Small ribosomal subunit protein bS21 (67 aa).

Belongs to the bacterial ribosomal protein bS21 family.

In Hydrogenobaculum sp. (strain Y04AAS1), this protein is Small ribosomal subunit protein bS21.